Reading from the N-terminus, the 204-residue chain is Holliday junction branch migration complex subunit RuvA (204 aa).

The segment at 1 to 64 (MIGHLTGRLV…EDAHLLFGFS (64 aa)) is domain I. The segment at 65-143 (QKTDRTLFRE…GIQQEDFFIE (79 aa)) is domain II. The segment at 144–155 (SQHLKQPEHALN) is flexible linker. Positions 156–204 (EQDIPASEAISALIALGYKAAEAEKLVKKISKPALSSEQLIREALKAAL) are domain III.

This sequence belongs to the RuvA family. In terms of assembly, homotetramer. Forms an RuvA(8)-RuvB(12)-Holliday junction (HJ) complex. HJ DNA is sandwiched between 2 RuvA tetramers; dsDNA enters through RuvA and exits via RuvB. An RuvB hexamer assembles on each DNA strand where it exits the tetramer. Each RuvB hexamer is contacted by two RuvA subunits (via domain III) on 2 adjacent RuvB subunits; this complex drives branch migration. In the full resolvosome a probable DNA-RuvA(4)-RuvB(12)-RuvC(2) complex forms which resolves the HJ.

It is found in the cytoplasm. Its function is as follows. The RuvA-RuvB-RuvC complex processes Holliday junction (HJ) DNA during genetic recombination and DNA repair, while the RuvA-RuvB complex plays an important role in the rescue of blocked DNA replication forks via replication fork reversal (RFR). RuvA specifically binds to HJ cruciform DNA, conferring on it an open structure. The RuvB hexamer acts as an ATP-dependent pump, pulling dsDNA into and through the RuvAB complex. HJ branch migration allows RuvC to scan DNA until it finds its consensus sequence, where it cleaves and resolves the cruciform DNA. This chain is Holliday junction branch migration complex subunit RuvA, found in Pasteurella multocida (strain Pm70).